Consider the following 408-residue polypeptide: Formate-dependent phosphoribosylglycinamide formyltransferase (408 aa).

N(1)-(5-phospho-beta-D-ribosyl)glycinamide contacts are provided by residues 25–26 and Glu-85; that span reads EL. ATP contacts are provided by residues Arg-118, Lys-159, 164-169, 199-202, and Glu-207; these read SSGKGQ and EAFV. In terms of domain architecture, ATP-grasp spans 123–318; sequence KLAAEELGLP…EFELHAKAIL (196 aa). Mg(2+) is bound by residues Glu-277 and Glu-289. Residues Asp-296, Lys-365, and 372 to 373 each bind N(1)-(5-phospho-beta-D-ribosyl)glycinamide; that span reads RR.

Belongs to the PurK/PurT family. As to quaternary structure, homodimer.

It catalyses the reaction N(1)-(5-phospho-beta-D-ribosyl)glycinamide + formate + ATP = N(2)-formyl-N(1)-(5-phospho-beta-D-ribosyl)glycinamide + ADP + phosphate + H(+). It participates in purine metabolism; IMP biosynthesis via de novo pathway; N(2)-formyl-N(1)-(5-phospho-D-ribosyl)glycinamide from N(1)-(5-phospho-D-ribosyl)glycinamide (formate route): step 1/1. Involved in the de novo purine biosynthesis. Catalyzes the transfer of formate to 5-phospho-ribosyl-glycinamide (GAR), producing 5-phospho-ribosyl-N-formylglycinamide (FGAR). Formate is provided by PurU via hydrolysis of 10-formyl-tetrahydrofolate. This is Formate-dependent phosphoribosylglycinamide formyltransferase from Corynebacterium glutamicum (strain R).